The chain runs to 156 residues: Endogenous retrovirus group K member 104 Pro protein (156 aa).

The Peptidase A2 domain occupies 21–96; sequence FEGLVDTEAD…IPLNLWGQDL (76 aa). Aspartate 26 is a catalytic residue. Positions 111–156 constitute a G-patch domain; that stretch reads YSPTSQKIMTKMGYIPGKGLGKNEDGIKVPVEAKINQKREGIGYPF.

Belongs to the peptidase A2 family. HERV class-II K(HML-2) subfamily. Active as a homodimer. Autoproteolytically processed at the N-terminus. Expected C-terminal autoprocessing not detected. The sequence shown is that of the processed Pro protein.

It carries out the reaction Processing at the authentic HIV-1 PR recognition site and release of the mature p17 matrix and the p24 capsid protein, as a result of the cleavage of the -SQNY-|-PIVQ- cleavage site.. Its function is as follows. Retroviral proteases have roles in the processing of the primary translation products and the maturation of the viral particle. Endogenous Pro proteins may have kept, lost or modified their original function during evolution. The polypeptide is Endogenous retrovirus group K member 104 Pro protein (HERV-K104) (Homo sapiens (Human)).